A 410-amino-acid chain; its full sequence is Peptidase T (410 aa).

A Zn(2+)-binding site is contributed by H79. The active site involves D81. D142 serves as a coordination point for Zn(2+). E176 functions as the Proton acceptor in the catalytic mechanism. Residues E177, D199, and H381 each contribute to the Zn(2+) site.

It belongs to the peptidase M20B family. Zn(2+) is required as a cofactor.

It localises to the cytoplasm. It catalyses the reaction Release of the N-terminal residue from a tripeptide.. Functionally, cleaves the N-terminal amino acid of tripeptides. The sequence is that of Peptidase T from Bacillus thuringiensis subsp. konkukian (strain 97-27).